We begin with the raw amino-acid sequence, 2568 residues long: Highly reducing polyketide synthase AN6791 (2568 aa).

The region spanning Ala-11–Ser-445 is the Ketosynthase family 3 (KS3) domain. Residues Cys-200, His-326, and His-366 each act as for beta-ketoacyl synthase activity in the active site. Positions Val-558–Val-882 constitute a Malonyl-CoA:ACP transacylase (MAT) domain. Residues His-949–Ala-1087 form an N-terminal hotdog fold region. The 310-residue stretch at His-949 to Pro-1258 folds into the PKS/mFAS DH domain. His-981 functions as the Proton acceptor; for dehydratase activity in the catalytic mechanism. A C-terminal hotdog fold region spans residues Thr-1104 to Pro-1258. Residue Asp-1169 is the Proton donor; for dehydratase activity of the active site. The segment at Arg-1311–Trp-1620 is methyltransferase (CMet) domain. One can recognise an Enoyl reductase (ER) domain in the interval Gly-1857–Leu-2174. One can recognise a Ketoreductase (KR) domain in the interval Ala-2197–Lys-2375. Residues Gln-2481–Ser-2558 form the Carrier domain. O-(pantetheine 4'-phosphoryl)serine is present on Ser-2518.

The cofactor is pantetheine 4'-phosphate.

It functions in the pathway secondary metabolite biosynthesis. Highly reducing polyketide synthase; part of a cluster that mediates the biosynthesis of a yet undetermined secondary metabolite. With esterase AN6793, produces a pathway intermediate compound with molecular weight 258. The sequence is that of Highly reducing polyketide synthase AN6791 from Emericella nidulans (strain FGSC A4 / ATCC 38163 / CBS 112.46 / NRRL 194 / M139) (Aspergillus nidulans).